A 162-amino-acid chain; its full sequence is uncharacterized protein (162 aa).

It belongs to the baculoviridae 19 kDa protein family.

This is an uncharacterized protein from Tortricidae (ClGV).